Reading from the N-terminus, the 519-residue chain is Protein nucleotidyltransferase YdiU (519 aa).

The ATP site is built by G101, G103, R104, K123, D135, G136, R193, and R200. D271 acts as the Proton acceptor in catalysis. Mg(2+) is bound by residues N272 and D281. D281 contributes to the ATP binding site.

It belongs to the SELO family. It depends on Mg(2+) as a cofactor. Mn(2+) serves as cofactor.

The catalysed reaction is L-seryl-[protein] + ATP = 3-O-(5'-adenylyl)-L-seryl-[protein] + diphosphate. It catalyses the reaction L-threonyl-[protein] + ATP = 3-O-(5'-adenylyl)-L-threonyl-[protein] + diphosphate. It carries out the reaction L-tyrosyl-[protein] + ATP = O-(5'-adenylyl)-L-tyrosyl-[protein] + diphosphate. The enzyme catalyses L-histidyl-[protein] + UTP = N(tele)-(5'-uridylyl)-L-histidyl-[protein] + diphosphate. The catalysed reaction is L-seryl-[protein] + UTP = O-(5'-uridylyl)-L-seryl-[protein] + diphosphate. It catalyses the reaction L-tyrosyl-[protein] + UTP = O-(5'-uridylyl)-L-tyrosyl-[protein] + diphosphate. Functionally, nucleotidyltransferase involved in the post-translational modification of proteins. It can catalyze the addition of adenosine monophosphate (AMP) or uridine monophosphate (UMP) to a protein, resulting in modifications known as AMPylation and UMPylation. This Tolumonas auensis (strain DSM 9187 / NBRC 110442 / TA 4) protein is Protein nucleotidyltransferase YdiU.